Reading from the N-terminus, the 85-residue chain is UPF0434 protein HNE_3545 (85 aa).

Belongs to the UPF0434 family.

This Hyphomonas neptunium (strain ATCC 15444) protein is UPF0434 protein HNE_3545.